Consider the following 407-residue polypeptide: MEAVVNKFLKYISFDTKSNEDSNAHPSTEGQMVLAKELARELKEMGMIDVSVDSKAYVMATLPANTENHVPTIGFIAHMDTAPDMSGKDVKPQFVENYDGKDIILNKEKNIVLKVKDFPEIKDYIGKTLITTDGTTLLGADDKAGVAEIMTAMEHLINHPEIKHGTVKIAFTPDEEIGAGADYFDVEKFNADFAYTVDGGTVGELEYENFNAAGVKLTIHGRNVHPGSAKDKMINSITVGNELHSMLPENEVPEHTEGYEGFYHIVAFNGTVEETKMQYIIRDFDRKKFEERKATMQKVVDTLNSKYGEGTVELQMNDQYYNMKEKVEPVHHIVDTAFKAIEEVGLVPKVVPIRGGTDGARLSFMGLPTPNLFTGGHNFHGKFEFIPTFAMSKAVDVILKIIELYSK.

His78 is a binding site for Zn(2+). Asp80 is a catalytic residue. Zn(2+) is bound at residue Asp141. Glu175 acts as the Proton acceptor in catalysis. Glu176, Asp198, and His380 together coordinate Zn(2+).

It belongs to the peptidase M20B family. Zn(2+) is required as a cofactor.

The protein resides in the cytoplasm. It catalyses the reaction Release of the N-terminal residue from a tripeptide.. Cleaves the N-terminal amino acid of tripeptides. This is Peptidase T from Clostridium novyi (strain NT).